A 274-amino-acid polypeptide reads, in one-letter code: Protein YeeZ (274 aa).

The first 24 residues, 1 to 24 (MKKVAIVGLGWLGMPLAMSLSARG), serve as a signal peptide directing secretion. 170-177 (GRFFAGKT) contacts ATP.

This chain is Protein YeeZ (yeeZ), found in Escherichia coli O157:H7.